A 408-amino-acid chain; its full sequence is S100P-binding protein (408 aa).

3 disordered regions span residues 1-111 (MMCS…AETP), 162-234 (KDET…SENP), and 271-291 (VSTS…MKGH). Residues 28–59 (SLDEDGLDDSLLELSEGEEDDGDVNYTEEEID) are compositionally biased toward acidic residues. 2 stretches are compositionally biased toward basic and acidic residues: residues 77-86 (DGGHVEKGER) and 162-185 (KDET…REDG). Position 187 is a phosphoserine (Ser-187). A compositionally biased stretch (polar residues) spans 188-234 (PNESKLCTESEGISPNNSAWNGPQLSSSNNNFQQTVSDKNMPDSENP). Over residues 280-291 (VLNKDSGKMKGH) the composition is skewed to basic and acidic residues.

As to quaternary structure, interacts with S100P. As to expression, expressed in brain, spleen, and lung. Not detected in pancreas or liver. In pancreas, expressed predominantly in islet cells and to a lesser extent in acinar cells, but not expressed in ductal cells. Up-regulated in various pancreatic ductal adenocarcinomas and pancreatic intraepithelial neoplasias. Detected in pancreatic ductal adenocarcinoma cells (at protein level). Not detected in non-neoplastic ductal epithelium (at protein level).

The protein resides in the nucleus. In Homo sapiens (Human), this protein is S100P-binding protein.